Consider the following 163-residue polypeptide: Peptide deformylase 3 (163 aa).

Cys-91 and His-133 together coordinate Fe cation. The active site involves Glu-134. Fe cation is bound at residue His-137.

The protein belongs to the polypeptide deformylase family. Requires Fe(2+) as cofactor.

The enzyme catalyses N-terminal N-formyl-L-methionyl-[peptide] + H2O = N-terminal L-methionyl-[peptide] + formate. In terms of biological role, removes the formyl group from the N-terminal Met of newly synthesized proteins. Requires at least a dipeptide for an efficient rate of reaction. N-terminal L-methionine is a prerequisite for activity but the enzyme has broad specificity at other positions. This Shewanella oneidensis (strain ATCC 700550 / JCM 31522 / CIP 106686 / LMG 19005 / NCIMB 14063 / MR-1) protein is Peptide deformylase 3.